Here is a 329-residue protein sequence, read N- to C-terminus: 36 kDa antigen (329 aa).

A helical membrane pass occupies residues 11–31 (AILTGGGALLLGLIVLFYLAY).

The protein belongs to the membrane fusion protein (MFP) (TC 8.A.1) family.

The protein localises to the membrane. This Helicobacter pylori (strain J99 / ATCC 700824) (Campylobacter pylori J99) protein is 36 kDa antigen.